We begin with the raw amino-acid sequence, 435 residues long: THACMDLKLGDKRMVFDPWLIGPAFARGWWLLHEPPSDWLERLSRADLIYISHMHSDHLSYPTLKKLAERRPDVPIYVGNTERPVFWNLNQSGVQLTNINVVPFGIWQQVDKNLRFMILMDGVHPEMDTCIIVEYKGHKILNTVDCTRPNGGRLPMKVALMMSDFAGGASGFPMTFSGGKFTEEWKAQFIKTERKKLLNYKARLVKDLQPRIYCPFPGYFVESHPADKYIKETNIKNDPNELNNLIKKNSEVVTWTPRPGATLDLGRMLKDPTDSKGIVEPPEGTKIYKDSWDFGPYLNILNAAIGDEIFRHSSWIKEYFTWAGFKDYNLVVRMIETDEDFSPLPGGYDYLVDFLDLSFPKERPSREHPYEEIRSRVDVIRHVVKNGLLWDDLYIGFQTRLQRDPDIYHHLFWNHFQIKLPLTPPDWKSFLMCSG.

Belongs to the CMP-Neu5Ac hydroxylase family. The cofactor is [2Fe-2S] cluster.

Its subcellular location is the cytoplasm. The enzyme catalyses CMP-N-acetyl-beta-neuraminate + 2 Fe(II)-[cytochrome b5] + O2 + 2 H(+) = CMP-N-glycoloyl-beta-neuraminate + 2 Fe(III)-[cytochrome b5] + H2O. It participates in amino-sugar metabolism; N-acetylneuraminate metabolism. Functionally, sialic acids are components of carbohydrate chains of glycoconjugates and are involved in cell-cell recognition and cell-pathogen interactions. Catalyzes the conversion of CMP-N-acetylneuraminic acid (CMP-Neu5Ac) into its hydroxylated derivative CMP-N-glycolylneuraminic acid (CMP-Neu5Gc), a sialic acid abundantly expressed at the surface of many cells. The polypeptide is Cytidine monophosphate-N-acetylneuraminic acid hydroxylase (Sus scrofa (Pig)).